Reading from the N-terminus, the 447-residue chain is N-succinylarginine dihydrolase (447 aa).

Substrate contacts are provided by residues 19–28 (AGLSFGNEAS), N110, and 137–138 (HR). The active site involves E174. Position 213 (R213) interacts with substrate. Residue H249 is part of the active site. Positions 251 and 364 each coordinate substrate. The active-site Nucleophile is C370.

This sequence belongs to the succinylarginine dihydrolase family. Homodimer.

The catalysed reaction is N(2)-succinyl-L-arginine + 2 H2O + 2 H(+) = N(2)-succinyl-L-ornithine + 2 NH4(+) + CO2. It functions in the pathway amino-acid degradation; L-arginine degradation via AST pathway; L-glutamate and succinate from L-arginine: step 2/5. Functionally, catalyzes the hydrolysis of N(2)-succinylarginine into N(2)-succinylornithine, ammonia and CO(2). This chain is N-succinylarginine dihydrolase, found in Yersinia enterocolitica serotype O:8 / biotype 1B (strain NCTC 13174 / 8081).